The sequence spans 167 residues: uncharacterized protein (167 aa).

The next 4 membrane-spanning stretches (helical) occupy residues Leu13 to Ile33, Val37 to Tyr57, Trp61 to Glu81, and Leu103 to Ser123.

It localises to the cell membrane. This is an uncharacterized protein from Haemophilus influenzae (strain ATCC 51907 / DSM 11121 / KW20 / Rd).